Here is a 270-residue protein sequence, read N- to C-terminus: Interleukin-1 beta (270 aa).

The propeptide occupies 1-118 (MATVPEPTSE…VYDDDAFVCD (118 aa)).

Belongs to the IL-1 family. In terms of assembly, monomer. In its precursor form, weakly interacts with full-length MEFV; the mature cytokine does not interact at all. Interacts with integrins ITGAV:ITGBV and ITGA5:ITGB1; integrin-binding is required for IL1B signaling. Interacts with cargo receptor TMED10; the interaction is direct and is required for the secretion of IL1B mature form. Interacts with HSP90AB1; the interaction facilitates cargo translocation into the ERGIC. Interacts with HSP90B1; the interaction facilitates cargo translocation into the ERGIC.

The protein localises to the cytoplasm. Its subcellular location is the cytosol. It localises to the secreted. It is found in the lysosome. The protein resides in the extracellular exosome. In terms of biological role, potent pro-inflammatory cytokine. Initially discovered as the major endogenous pyrogen, induces prostaglandin synthesis, neutrophil influx and activation, T-cell activation and cytokine production, B-cell activation and antibody production, and fibroblast proliferation and collagen production. Promotes Th17 differentiation of T-cells. Synergizes with IL12/interleukin-12 to induce IFNG synthesis from T-helper 1 (Th1) cells. Plays a role in angiogenesis by inducing VEGF production synergistically with TNF and IL6. Involved in transduction of inflammation downstream of pyroptosis: its mature form is specifically released in the extracellular milieu by passing through the gasdermin-D (GSDMD) pore. The protein is Interleukin-1 beta (IL1B) of Phoca vitulina richardii (Pacific harbor seal).